The following is a 485-amino-acid chain: MTKVRVRYAPSPTGHLHIGNARTALFNYLFARHNDGEFIIRIEDTDQKRNIEDGEKSQLENLAWLGMEWDESPAHPGEYGPYRQSERKEIYQPLIDQLLSSNRAYKCYCTPEELEAEREAQQARGEMPHYAGTCANLTPSEQAAKEAAGLEPVIRFRVPRNTEYKFDDIVKGEITFESDNIGGDFVIQKRDGMPTYNFAVAVDDHLMKISHVLRGDDHIANTPKQLMIYEAFEWTPPVFGHMTLIINSETGKKLSKRDETILQFIEQYRELGYLPEAMFNFIALLGWSPVGEEEIFSQEDLIKLFDEQRLSKSPAAFDAKKLEWINNQYMKQMDLSELTDMCIPYLVADGRVEENPSPEKIEWLKQLVSLYQPQMSYAAEIVELSNLFFNEHPVLDDAAKEFLQGETVPTVLHAFKEQLEALDVFDVPSIKAAIKAVQKETGVKGKNLFMPIRIAVSGQMHGPELGETIELLGKEKALDHLNKVL.

The 'HIGH' region motif lies at 10-20 (PSPTGHLHIGN). The 'KMSKS' region signature appears at 253–257 (KLSKR). Lys-256 contributes to the ATP binding site.

Belongs to the class-I aminoacyl-tRNA synthetase family. Glutamate--tRNA ligase type 1 subfamily. In terms of assembly, monomer.

The protein resides in the cytoplasm. The catalysed reaction is tRNA(Glu) + L-glutamate + ATP = L-glutamyl-tRNA(Glu) + AMP + diphosphate. Its function is as follows. Catalyzes the attachment of glutamate to tRNA(Glu) in a two-step reaction: glutamate is first activated by ATP to form Glu-AMP and then transferred to the acceptor end of tRNA(Glu). The polypeptide is Glutamate--tRNA ligase (Enterococcus faecalis (strain ATCC 700802 / V583)).